We begin with the raw amino-acid sequence, 148 residues long: Deoxyuridine 5'-triphosphate nucleotidohydrolase (148 aa).

Substrate is bound by residues 67–69 (RSG), N80, 84–86 (LID), and M94.

It belongs to the dUTPase family. Mg(2+) is required as a cofactor.

The catalysed reaction is dUTP + H2O = dUMP + diphosphate + H(+). The protein operates within pyrimidine metabolism; dUMP biosynthesis; dUMP from dCTP (dUTP route): step 2/2. Its function is as follows. This enzyme is involved in nucleotide metabolism: it produces dUMP, the immediate precursor of thymidine nucleotides and it decreases the intracellular concentration of dUTP so that uracil cannot be incorporated into DNA. The sequence is that of Deoxyuridine 5'-triphosphate nucleotidohydrolase from Paraburkholderia phymatum (strain DSM 17167 / CIP 108236 / LMG 21445 / STM815) (Burkholderia phymatum).